The chain runs to 378 residues: Ribosomal RNA large subunit methyltransferase G (378 aa).

It belongs to the methyltransferase superfamily. RlmG family.

Its subcellular location is the cytoplasm. The enzyme catalyses guanosine(1835) in 23S rRNA + S-adenosyl-L-methionine = N(2)-methylguanosine(1835) in 23S rRNA + S-adenosyl-L-homocysteine + H(+). Its function is as follows. Specifically methylates the guanine in position 1835 (m2G1835) of 23S rRNA. The sequence is that of Ribosomal RNA large subunit methyltransferase G from Salmonella dublin (strain CT_02021853).